A 156-amino-acid chain; its full sequence is ATP synthase subunit b (156 aa).

The chain crosses the membrane as a helical span at residues 7–29 (LFAQMVVFLVLAWFTMKFVWPPL).

This sequence belongs to the ATPase B chain family. F-type ATPases have 2 components, F(1) - the catalytic core - and F(0) - the membrane proton channel. F(1) has five subunits: alpha(3), beta(3), gamma(1), delta(1), epsilon(1). F(0) has three main subunits: a(1), b(2) and c(10-14). The alpha and beta chains form an alternating ring which encloses part of the gamma chain. F(1) is attached to F(0) by a central stalk formed by the gamma and epsilon chains, while a peripheral stalk is formed by the delta and b chains.

It is found in the cell inner membrane. In terms of biological role, f(1)F(0) ATP synthase produces ATP from ADP in the presence of a proton or sodium gradient. F-type ATPases consist of two structural domains, F(1) containing the extramembraneous catalytic core and F(0) containing the membrane proton channel, linked together by a central stalk and a peripheral stalk. During catalysis, ATP synthesis in the catalytic domain of F(1) is coupled via a rotary mechanism of the central stalk subunits to proton translocation. Functionally, component of the F(0) channel, it forms part of the peripheral stalk, linking F(1) to F(0). The polypeptide is ATP synthase subunit b (Burkholderia cenocepacia (strain ATCC BAA-245 / DSM 16553 / LMG 16656 / NCTC 13227 / J2315 / CF5610) (Burkholderia cepacia (strain J2315))).